Consider the following 111-residue polypeptide: MSVALTTLLLFVATAVAELVGCYLPYLWLRKGGSVWLLLPAALSLAVFVWLLTLHPAASGRVYAAYGGVYIATALLWLWWVDRVTPTRWDLLGAGCCLLGMAIIMFSPRSG.

Helical transmembrane passes span 8 to 28 (LLLF…PYLW), 34 to 54 (SVWL…LLTL), 62 to 82 (VYAA…WWVD), and 91 to 111 (LLGA…PRSG).

Belongs to the UPF0060 family.

It is found in the cell inner membrane. The chain is UPF0060 membrane protein XCC2880 from Xanthomonas campestris pv. campestris (strain ATCC 33913 / DSM 3586 / NCPPB 528 / LMG 568 / P 25).